Here is a 176-residue protein sequence, read N- to C-terminus: Putative ribosomal protein eS10-like (176 aa).

The tract at residues 104–176 (TLHRSRPETG…CGRGRGQPPQ (73 aa)) is disordered. Over residues 108–139 (SRPETGRPRPKGLEGKRPARLTRREADRDTYR) the composition is skewed to basic and acidic residues.

Belongs to the eukaryotic ribosomal protein eS10 family.

The chain is Putative ribosomal protein eS10-like (RPS10P5) from Homo sapiens (Human).